A 405-amino-acid chain; its full sequence is Cytochrome b (405 aa).

A helical membrane pass occupies residues 44–64 (FGSLAGIAMIIMIATGIFLAM). Residues His-94 and His-108 each contribute to the heme b site. A run of 8 helical transmembrane segments spans residues 97–117 (GASM…YYGS), 124–144 (VLWW…FMGY), 163–183 (FSAI…GFSV), 191–211 (FFSL…LHMW), 245–265 (FGLG…PNFF), 303–323 (LGGV…PWLD), 338–358 (GFFW…AMPA), and 368–388 (LATI…GWFE). The heme b site is built by His-195 and His-209.

This sequence belongs to the cytochrome b family. In terms of assembly, the main subunits of complex b-c1 are: cytochrome b, cytochrome c1 and the Rieske protein. The cofactor is heme b.

It localises to the cell membrane. Component of the ubiquinol-cytochrome c reductase complex (complex III or cytochrome b-c1 complex), which is a respiratory chain that generates an electrochemical potential coupled to ATP synthesis. The protein is Cytochrome b (petB) of Rhodospirillum rubrum.